A 384-amino-acid chain; its full sequence is Polyketide synthase BAS (384 aa).

Cys-157 acts as the Nucleophile and monoketide coumarate intermediate in catalysis. An S-(4-hydroxycinnamyl)cysteine modification is found at Cys-157.

Belongs to the thiolase-like superfamily. Chalcone/stilbene synthases family. In terms of assembly, homodimer.

The catalysed reaction is 4-coumaroyl-CoA + malonyl-CoA + H2O + H(+) = 4-hydroxybenzalacetone + 2 CO2 + 2 CoA. Its pathway is secondary metabolite biosynthesis; flavonoid biosynthesis. Its function is as follows. Polyketide synthase producing 4-hydroxybenzalacetone. Can use p-coumaryl-CoA as substrate but does not accept hexanoyl-CoA, isobutyryl-CoA, isovaleryl-CoA, and acetyl-CoA as a substrates. Catalyzes the initial key reaction step in the biosynthesis of phenylbutanoids. The protein is Polyketide synthase BAS (BAS) of Rheum palmatum (Chinese rhubarb).